The chain runs to 253 residues: LexA repressor (253 aa).

The segment at 1-33 is disordered; that stretch reads MTSQGRGTRRGGARGNVRAFPENPADAAGLTPR. Positions 54 to 74 form a DNA-binding region, H-T-H motif; sequence VREIGEAVGLTSTSSVAHQLK. Active-site for autocatalytic cleavage activity residues include Ser177 and Lys214.

This sequence belongs to the peptidase S24 family. Homodimer.

It catalyses the reaction Hydrolysis of Ala-|-Gly bond in repressor LexA.. Functionally, represses a number of genes involved in the response to DNA damage (SOS response), including recA and lexA. In the presence of single-stranded DNA, RecA interacts with LexA causing an autocatalytic cleavage which disrupts the DNA-binding part of LexA, leading to derepression of the SOS regulon and eventually DNA repair. The chain is LexA repressor from Frankia alni (strain DSM 45986 / CECT 9034 / ACN14a).